Reading from the N-terminus, the 611-residue chain is UvrABC system protein C (611 aa).

One can recognise a GIY-YIG domain in the interval 6–84 (NNPGVYRMFN…IKRLRPRFNV (79 aa)). Residues 194–229 (QSVKDHLAAAMQAASADLDFEHAAVYRDRLAALSHV) form the UVR domain.

The protein belongs to the UvrC family. Interacts with UvrB in an incision complex.

The protein resides in the cytoplasm. The UvrABC repair system catalyzes the recognition and processing of DNA lesions. UvrC both incises the 5' and 3' sides of the lesion. The N-terminal half is responsible for the 3' incision and the C-terminal half is responsible for the 5' incision. This chain is UvrABC system protein C, found in Brucella abortus (strain 2308).